The sequence spans 1341 residues: WD repeat-containing protein 19 (1341 aa).

WD repeat units follow at residues 11-51, 52-92, 95-134, 137-175, 273-311, and 317-356; these read SWLG…RSEI, SLPG…TSQL, GMRD…KIPV, KHTK…IRQT, DHKD…DMYA, and DENK…LGDA. TPR repeat units follow at residues 736-769, 775-808, 840-873, 895-928, 951-984, and 1020-1053; these read AQDL…AKRL, PFIS…DNKE, RVLK…DRAA, PKIH…NSVI, LDGA…NEAF, and EKRH…EDNV.

In terms of assembly, component of the IFT complex A (IFT-A) complex. IFT-A complex is divided into a core subcomplex composed of IFT122:IFT140:WDR19 which is associated with TULP3 and a peripheral subcomplex composed of IFT43:WDR35:TTC21B. Interacts (via C-terminal region) with IFT122 (via C-terminal region). Interacts with BBS1. Interacts with TTC25. Tissue-specific expression of isoforms. Expressed in the prostate, testis, epididymis, submaxillary and salivary glands. Expressed in ependymal cells lining brain ventricles (at protein level).

The protein resides in the cell projection. It is found in the cilium. It localises to the cytoplasm. Its subcellular location is the cytoskeleton. The protein localises to the cilium basal body. The protein resides in the photoreceptor outer segment. It is found in the flagellum. Functionally, as component of the IFT complex A (IFT-A), a complex required for retrograde ciliary transport and entry into cilia of G protein-coupled receptors (GPCRs), it is involved in cilia function and/or assembly. Essential for functional IFT-A assembly and ciliary entry of GPCRs. Associates with the BBSome complex to mediate ciliary transport. The protein is WD repeat-containing protein 19 of Mus musculus (Mouse).